Here is a 647-residue protein sequence, read N- to C-terminus: Protein RAD61 (647 aa).

Residues 1-90 (MRAYGKRGPV…QLDSKRNDQN (90 aa)) form a disordered region. Residues 66–82 (DSSSSFDGANEKPSSQL) are compositionally biased toward polar residues.

It is found in the nucleus. Functionally, involved in resistance to ionizing radiation. The protein is Protein RAD61 (RAD61) of Saccharomyces cerevisiae (strain ATCC 204508 / S288c) (Baker's yeast).